Here is a 787-residue protein sequence, read N- to C-terminus: Endonuclease MutS2 (787 aa).

Residue 331–338 coordinates ATP; sequence GPNTGGKT. In terms of domain architecture, Smr spans 711–786; sequence IDVRGKTSDD…EQGVTIVELR (76 aa).

This sequence belongs to the DNA mismatch repair MutS family. MutS2 subfamily. Homodimer. Binds to stalled ribosomes, contacting rRNA.

Functionally, endonuclease that is involved in the suppression of homologous recombination and thus may have a key role in the control of bacterial genetic diversity. In terms of biological role, acts as a ribosome collision sensor, splitting the ribosome into its 2 subunits. Detects stalled/collided 70S ribosomes which it binds and splits by an ATP-hydrolysis driven conformational change. Acts upstream of the ribosome quality control system (RQC), a ribosome-associated complex that mediates the extraction of incompletely synthesized nascent chains from stalled ribosomes and their subsequent degradation. Probably generates substrates for RQC. This is Endonuclease MutS2 from Caldicellulosiruptor saccharolyticus (strain ATCC 43494 / DSM 8903 / Tp8T 6331).